A 65-amino-acid polypeptide reads, in one-letter code: Large ribosomal subunit protein bL33m (65 aa).

The transit peptide at 1-8 (MFLSAVTF) directs the protein to the mitochondrion.

This sequence belongs to the bacterial ribosomal protein bL33 family. As to quaternary structure, component of the mitochondrial ribosome large subunit (39S) which comprises a 16S rRNA and about 50 distinct proteins.

It localises to the mitochondrion. The polypeptide is Large ribosomal subunit protein bL33m (MRPL33) (Bos taurus (Bovine)).